The following is a 342-amino-acid chain: MKAELPEPLKKDGFGEYKLMPESIDDLWHLSHLISPGNTVYAVTLRTVDGPSDKLRSEKLEKRPVRIGVKCEKAEFVPESSRLRVFGVISYGPDMGQHHTLNIEAGYEISVVRQWRQIDLARLERAVSSSVHGVVHIAAIEDGEAELYRVRQYGPERITTLTVGSGKTAELDSRQALFAELLTFLEKVTGSIVIAGPGFVKEDFVKFAKTKAPEIAERMLIADTRRCGYGAVQEAIGNGVLTRVAEDLQLAKEVSFMDEVFLRIGQNGAVAYGKSEVRQAIDYGAAETILVADSFVKDGGIEKMIEGAERLGANVVVLSTEFEPGTRLVGLGGVAALLRYKI.

It belongs to the eukaryotic release factor 1 family. Pelota subfamily. In terms of assembly, monomer. It depends on a divalent metal cation as a cofactor.

The protein localises to the cytoplasm. May function in recognizing stalled ribosomes, interact with stem-loop structures in stalled mRNA molecules, and effect endonucleolytic cleavage of the mRNA. May play a role in the release non-functional ribosomes and degradation of damaged mRNAs. Has endoribonuclease activity. The protein is Protein pelota homolog of Methanocorpusculum labreanum (strain ATCC 43576 / DSM 4855 / Z).